Here is a 534-residue protein sequence, read N- to C-terminus: CTP synthase (534 aa).

Positions 1 to 267 (MTKYIFVTGG…DQIVCDHLKL (267 aa)) are amidoligase domain. Serine 13 contributes to the CTP binding site. Serine 13 is a UTP binding site. 14-19 (SIGKGI) serves as a coordination point for ATP. Tyrosine 54 is an L-glutamine binding site. Residue aspartate 71 participates in ATP binding. Mg(2+) is bound by residues aspartate 71 and glutamate 141. CTP contacts are provided by residues 148–150 (DIE), 188–193 (KTKPTQ), and lysine 224. Residues 188–193 (KTKPTQ) and lysine 224 contribute to the UTP site. 240–242 (RNV) is a binding site for ATP. Positions 292–534 (KIALVGKYVE…FVTAAIKNSN (243 aa)) constitute a Glutamine amidotransferase type-1 domain. Position 354 (glycine 354) interacts with L-glutamine. The active-site Nucleophile; for glutamine hydrolysis is the cysteine 381. L-glutamine-binding positions include 382 to 385 (LGMQ), glutamate 405, and arginine 463. Residues histidine 508 and glutamate 510 contribute to the active site.

The protein belongs to the CTP synthase family. In terms of assembly, homotetramer.

The enzyme catalyses UTP + L-glutamine + ATP + H2O = CTP + L-glutamate + ADP + phosphate + 2 H(+). It carries out the reaction L-glutamine + H2O = L-glutamate + NH4(+). The catalysed reaction is UTP + NH4(+) + ATP = CTP + ADP + phosphate + 2 H(+). Its pathway is pyrimidine metabolism; CTP biosynthesis via de novo pathway; CTP from UDP: step 2/2. Its activity is regulated as follows. Allosterically activated by GTP, when glutamine is the substrate; GTP has no effect on the reaction when ammonia is the substrate. The allosteric effector GTP functions by stabilizing the protein conformation that binds the tetrahedral intermediate(s) formed during glutamine hydrolysis. Inhibited by the product CTP, via allosteric rather than competitive inhibition. Catalyzes the ATP-dependent amination of UTP to CTP with either L-glutamine or ammonia as the source of nitrogen. Regulates intracellular CTP levels through interactions with the four ribonucleotide triphosphates. The protein is CTP synthase of Streptococcus pyogenes serotype M28 (strain MGAS6180).